The chain runs to 315 residues: Small ribosomal subunit protein mS45 (315 aa).

The transit peptide at 1–66 (MRNSVEFSQL…SKYVACNSRS (66 aa)) directs the protein to the mitochondrion.

Belongs to the mitochondrion-specific ribosomal protein mS45 family. Component of the mitochondrial small ribosomal subunit (mt-SSU). Mature yeast 74S mitochondrial ribosomes consist of a small (37S) and a large (54S) subunit. The 37S small subunit contains a 15S ribosomal RNA (15S mt-rRNA) and at least 32 different proteins. The 54S large subunit contains a 21S rRNA (21S mt-rRNA) and at least 45 different proteins.

It is found in the mitochondrion. Its function is as follows. Component of the mitochondrial ribosome (mitoribosome), a dedicated translation machinery responsible for the synthesis of mitochondrial genome-encoded proteins, including at least some of the essential transmembrane subunits of the mitochondrial respiratory chain. The mitoribosomes are attached to the mitochondrial inner membrane and translation products are cotranslationally integrated into the membrane. Required for mitochondrial protein synthesis. Has a role in mitochondrial integrity and cell respiration. In Schizosaccharomyces pombe (strain 972 / ATCC 24843) (Fission yeast), this protein is Small ribosomal subunit protein mS45 (bot1).